The following is a 322-amino-acid chain: Labrum-interacting protein from saliva LIPS-2 (322 aa).

The first 20 residues, 1-20 (MKTSLPIVVLLTAVISGVHP), serve as a signal peptide directing secretion. Cysteines 27 and 62 form a disulfide. 2 N-linked (GlcNAc...) asparagine glycosylation sites follow: Asn168 and Asn175. Cys249 and Cys295 form a disulfide bridge.

In terms of assembly, monomer in solution. Interacts (via the N-terminal domain) with cuticular protein Cp19 (via the C-terminus). Proteolytically cleaved by human mast cell tryptase and chymase. In terms of processing, glycosylated. As to expression, female salivary gland (at protein level). Female saliva (at protein level).

The protein localises to the secreted. Functionally, salivary protein that promotes mosquito blood feeding on the vertebrate host by inducing morphological changes in the mosquito labrum. Interacts with the mosquito labrum end tip and triggers salivation and probing. Modulates enzymatic activities of human tryptase and chymase. This Aedes albopictus (Asian tiger mosquito) protein is Labrum-interacting protein from saliva LIPS-2.